Reading from the N-terminus, the 279-residue chain is Putative pyruvate, phosphate dikinase regulatory protein (279 aa).

156–163 (GVSRTSKT) contacts ADP.

The protein belongs to the pyruvate, phosphate/water dikinase regulatory protein family. PDRP subfamily.

The catalysed reaction is N(tele)-phospho-L-histidyl/L-threonyl-[pyruvate, phosphate dikinase] + ADP = N(tele)-phospho-L-histidyl/O-phospho-L-threonyl-[pyruvate, phosphate dikinase] + AMP + H(+). The enzyme catalyses N(tele)-phospho-L-histidyl/O-phospho-L-threonyl-[pyruvate, phosphate dikinase] + phosphate + H(+) = N(tele)-phospho-L-histidyl/L-threonyl-[pyruvate, phosphate dikinase] + diphosphate. Its function is as follows. Bifunctional serine/threonine kinase and phosphorylase involved in the regulation of the pyruvate, phosphate dikinase (PPDK) by catalyzing its phosphorylation/dephosphorylation. This is Putative pyruvate, phosphate dikinase regulatory protein from Maricaulis maris (strain MCS10) (Caulobacter maris).